Reading from the N-terminus, the 603-residue chain is DNA mismatch repair protein MutL (603 aa).

Belongs to the DNA mismatch repair MutL/HexB family.

In terms of biological role, this protein is involved in the repair of mismatches in DNA. It is required for dam-dependent methyl-directed DNA mismatch repair. May act as a 'molecular matchmaker', a protein that promotes the formation of a stable complex between two or more DNA-binding proteins in an ATP-dependent manner without itself being part of a final effector complex. This is DNA mismatch repair protein MutL from Listeria monocytogenes serotype 4a (strain HCC23).